A 378-amino-acid polypeptide reads, in one-letter code: Chaperone protein DnaJ 2 (378 aa).

Residues 4-68 (DYYGLLGVSR…EKRRIVDLGG (65 aa)) enclose the J domain. A CR-type zinc finger spans residues 128 to 210 (GVTKQVTVDT…CVGDGRVRAR (83 aa)). Residues cysteine 141, cysteine 144, cysteine 158, cysteine 161, cysteine 184, cysteine 187, cysteine 198, and cysteine 201 each contribute to the Zn(2+) site. CXXCXGXG motif repeat units lie at residues 141–148 (CDRCQGKG), 158–165 (CDTCGGRG), 184–191 (CPTCRGVG), and 198–205 (CCQCVGDG).

This sequence belongs to the DnaJ family. As to quaternary structure, homodimer. The cofactor is Zn(2+).

The protein resides in the cytoplasm. Its function is as follows. Participates actively in the response to hyperosmotic and heat shock by preventing the aggregation of stress-denatured proteins and by disaggregating proteins, also in an autonomous, DnaK-independent fashion. Unfolded proteins bind initially to DnaJ; upon interaction with the DnaJ-bound protein, DnaK hydrolyzes its bound ATP, resulting in the formation of a stable complex. GrpE releases ADP from DnaK; ATP binding to DnaK triggers the release of the substrate protein, thus completing the reaction cycle. Several rounds of ATP-dependent interactions between DnaJ, DnaK and GrpE are required for fully efficient folding. Also involved, together with DnaK and GrpE, in the DNA replication of plasmids through activation of initiation proteins. In Mycobacterium leprae (strain TN), this protein is Chaperone protein DnaJ 2.